The following is a 247-amino-acid chain: Adenosylcobinamide-GDP ribazoletransferase (247 aa).

6 consecutive transmembrane segments (helical) span residues 34 to 54 (IVMF…IFIL), 59 to 79 (CGIP…TGGF), 113 to 133 (GGLA…ELAL), 138 to 158 (MLAA…LLMY), 171 to 191 (VFIG…AVIV), and 194 to 214 (VLLP…AIFI).

This sequence belongs to the CobS family. Mg(2+) serves as cofactor.

The protein resides in the cell inner membrane. It carries out the reaction alpha-ribazole + adenosylcob(III)inamide-GDP = adenosylcob(III)alamin + GMP + H(+). The catalysed reaction is alpha-ribazole 5'-phosphate + adenosylcob(III)inamide-GDP = adenosylcob(III)alamin 5'-phosphate + GMP + H(+). It participates in cofactor biosynthesis; adenosylcobalamin biosynthesis; adenosylcobalamin from cob(II)yrinate a,c-diamide: step 7/7. Its function is as follows. Joins adenosylcobinamide-GDP and alpha-ribazole to generate adenosylcobalamin (Ado-cobalamin). Also synthesizes adenosylcobalamin 5'-phosphate from adenosylcobinamide-GDP and alpha-ribazole 5'-phosphate. The sequence is that of Adenosylcobinamide-GDP ribazoletransferase from Salmonella paratyphi A (strain ATCC 9150 / SARB42).